Reading from the N-terminus, the 688-residue chain is Envelope glycoprotein gp70 (688 aa).

Residues 1-15 (MPKHQSGSPTDSSDL) show a composition bias toward polar residues. The interval 1-37 (MPKHQSGSPTDSSDLLLSGKKQRPHLALRRKRRREMR) is disordered. The N-terminal stretch at 1 to 98 (MPKHQSGSPT…SVLGPPPVTG (98 aa)) is a signal peptide. Over residues 20–37 (KKQRPHLALRRKRRREMR) the composition is skewed to basic residues. Residues 99–624 (ESYWAYLPKP…ALNPLDWTQY (526 aa)) lie on the Extracellular side of the membrane. 2 N-linked (GlcNAc...) asparagine; by host glycosylation sites follow: N127 and N143. Residues 426 to 474 (LLPVDIGDEPWFDDSAIQTFRYATDLIRAKRFVAAIILGISALIAIITS) adopt a coiled-coil conformation. The propeptide occupies 455–456 (KR). Residues 457-477 (FVAAIILGISALIAIITSFAV) are fusion peptide. The interval 463-481 (LGISALIAIITSFAVATTA) is immunosuppression. N498 carries an N-linked (GlcNAc...) asparagine; by host glycan. A coiled-coil region spans residues 511-541 (LKLEARLNALEEVVLELGQDVANLKTRMSTR). Residue N557 is glycosylated (N-linked (GlcNAc...) asparagine; by host). The chain crosses the membrane as a helical span at residues 625–645 (FIFIGVGALLLVIVLMIFPIV). Residues 646–688 (FQCLAKSLDQVQSDLNVLLLKKKKGGNAAPAAEMVELPRVSYT) lie on the Cytoplasmic side of the membrane.

As to quaternary structure, the mature envelope protein (Env) consists of a trimer of SU-TM heterodimers attached by noncovalent interactions or by a labile interchain disulfide bond. Specific enzymatic cleavages in vivo yield mature proteins. Envelope glycoproteins are synthesized as an inactive precursor that is N-glycosylated and processed likely by host cell furin or by a furin-like protease in the Golgi to yield the mature SU and TM proteins. The cleavage site between SU and TM requires the minimal sequence [KR]-X-[KR]-R.

It is found in the virion membrane. The protein resides in the host cell membrane. Functionally, the surface protein (SU) attaches the virus to the host cell by binding to its receptor. This interaction triggers the refolding of the transmembrane protein (TM) and is thought to activate its fusogenic potential by unmasking its fusion peptide. Fusion occurs at the host cell plasma membrane. In terms of biological role, the transmembrane protein (TM) acts as a class I viral fusion protein. Under the current model, the protein has at least 3 conformational states: pre-fusion native state, pre-hairpin intermediate state, and post-fusion hairpin state. During viral and target cell membrane fusion, the coiled coil regions (heptad repeats) assume a trimer-of-hairpins structure, positioning the fusion peptide in close proximity to the C-terminal region of the ectodomain. The formation of this structure appears to drive apposition and subsequent fusion of viral and target cell membranes. Membranes fusion leads to delivery of the nucleocapsid into the cytoplasm. The sequence is that of Envelope glycoprotein gp70 (env) from Mouse mammary tumor virus (strain BR6) (MMTV).